A 133-amino-acid chain; its full sequence is Small ribosomal subunit protein uS8 (133 aa).

This sequence belongs to the universal ribosomal protein uS8 family. As to quaternary structure, part of the 30S ribosomal subunit. Contacts proteins S5 and S12.

In terms of biological role, one of the primary rRNA binding proteins, it binds directly to 16S rRNA central domain where it helps coordinate assembly of the platform of the 30S subunit. This Trichormus variabilis (strain ATCC 29413 / PCC 7937) (Anabaena variabilis) protein is Small ribosomal subunit protein uS8.